The sequence spans 196 residues: Carnitine operon protein CaiE (196 aa).

A disordered region spans residues 174-196 (QPLRQMEENRPRLQGTTDVTPKR). Positions 187-196 (QGTTDVTPKR) are enriched in polar residues.

The protein belongs to the transferase hexapeptide repeat family.

The protein operates within amine and polyamine metabolism; carnitine metabolism. Its function is as follows. Overproduction of CaiE stimulates the activity of CaiB and CaiD. The chain is Carnitine operon protein CaiE (caiE) from Escherichia coli (strain K12).